Consider the following 184-residue polypeptide: MSENNTNNGLDEDFDDDDELAKIREQRMKQLKEESKLKQSFLSTHGELKEIDEQDFLKEVTGTDNVVVHFYHSDFQRCKILDKSLEILAKTHLGTKFLKVNAEKAQFFTGKLGIRILPTLVFFSNGIAVDRCVGFEEFGGIDSFKIEQLAIRISKAGVLDFKHTTGLKIISKQDVKNNKFKEDD.

A thioredoxin fold region spans residues 45–184; that stretch reads HGELKEIDEQ…VKNNKFKEDD (140 aa).

The protein belongs to the phosducin family.

The polypeptide is Phosducin-like protein 3 (phlp3) (Dictyostelium discoideum (Social amoeba)).